Reading from the N-terminus, the 187-residue chain is Elongation factor P (187 aa).

The protein belongs to the elongation factor P family.

Its subcellular location is the cytoplasm. It participates in protein biosynthesis; polypeptide chain elongation. Involved in peptide bond synthesis. Stimulates efficient translation and peptide-bond synthesis on native or reconstituted 70S ribosomes in vitro. Probably functions indirectly by altering the affinity of the ribosome for aminoacyl-tRNA, thus increasing their reactivity as acceptors for peptidyl transferase. The protein is Elongation factor P of Desulfosudis oleivorans (strain DSM 6200 / JCM 39069 / Hxd3) (Desulfococcus oleovorans).